The chain runs to 88 residues: Large ribosomal subunit protein bL27 (88 aa).

The disordered stretch occupies residues 1–21 (MAHKKGTGSTRNGRDSRAQRL).

It belongs to the bacterial ribosomal protein bL27 family.

The sequence is that of Large ribosomal subunit protein bL27 from Picosynechococcus sp. (strain ATCC 27264 / PCC 7002 / PR-6) (Agmenellum quadruplicatum).